We begin with the raw amino-acid sequence, 128 residues long: Protein C10 (128 aa).

The protein belongs to the UPF0456 family.

It is found in the cytoplasm. The protein is Protein C10 of Xenopus tropicalis (Western clawed frog).